The sequence spans 333 residues: Calcium uniporter protein, mitochondrial (333 aa).

The transit peptide at 1–22 (MRNGRCLVTPFVTAQRLANLRN) directs the protein to the mitochondrion. Topologically, residues 23–214 (TLWNRQQIAF…QECEAHTDRV (192 aa)) are mitochondrial matrix. The stretch at 180 to 193 (KKLLLQLENAETLL) forms a coiled coil. Residues 195–213 (PLHDAKRKIEQECEAHTDR) form an outer juxtamembrane helix (OJMH) region. A helical transmembrane segment spans residues 215–234 (MWAGFAAMGVQTGLFARLTW). Topologically, residues 235 to 243 (WEYSWDIME) are mitochondrial intermembrane. Residues 239–247 (WDIMEPVTY) carry the Selectivity filter motif. Glu243 serves as a coordination point for Ca(2+). A helical membrane pass occupies residues 244–260 (PVTYFATYSTVCATFGY). The Mitochondrial matrix portion of the chain corresponds to 261–333 (YLYTQQSFEY…SYLSNLEAEK (73 aa)). An inner juxtamembrane helix (IJMH) region spans residues 262 to 271 (LYTQQSFEYP). Residues 289-316 (QNFDIEKYNRLVTEVDELRNQLKRMRDP) adopt a coiled-coil conformation.

It belongs to the MCU (TC 1.A.77) family.

It is found in the mitochondrion inner membrane. The enzyme catalyses Ca(2+)(in) = Ca(2+)(out). With respect to regulation, inhibited by ruthenium red or its derivative Ru360; possibly by obstructing the pore. Its function is as follows. Mitochondrial inner membrane calcium uniporter that mediates calcium uptake into mitochondria. Constitutes a pore-forming and calcium-conducting subunit. Mitochondrial calcium homeostasis plays key roles in cellular physiology and regulates cell bioenergetics, cytoplasmic calcium signals and activation of cell death pathways. Required for rapid mitochondrial calcium uptake and mitochondrial reactive oxygen species (mtROS) production after wounding. In addition, together with mitochondrial calcium regulator micu-1, required for mitochondrial calcium uptake following axon injury in PLM touch receptor neurons. The chain is Calcium uniporter protein, mitochondrial from Caenorhabditis elegans.